The following is a 195-amino-acid chain: CASP-like protein 1E2 (195 aa).

The Cytoplasmic portion of the chain corresponds to 1–29; that stretch reads MEVESKTSFGGMESKSKEVKVVTGGKLRP. A helical membrane pass occupies residues 30–50; that stretch reads FDLVLRVVALALTLVAAVLLG. The Extracellular segment spans residues 51-82; that stretch reads VDKQTKVVSLQLLPTLPPMDVPVTAKWRYLSA. Residues 83–103 traverse the membrane as a helical segment; it reads FVYFVVSNAIACSYAALSLLL. Over 104–122 the chain is Cytoplasmic; that stretch reads SVGNSKGNKGLGLAITVMD. Residues 123-143 traverse the membrane as a helical segment; the sequence is LVMVALLFSSNGAAGAIGLMG. Topologically, residues 144–165 are extracellular; that stretch reads YEGNSRVRWGKVCNVFGKFCNQ. The chain crosses the membrane as a helical span at residues 166–186; the sequence is VAVALGLSFFGGLAFFLLVVM. The Cytoplasmic segment spans residues 187-195; sequence AAFALNKRH.

This sequence belongs to the Casparian strip membrane proteins (CASP) family. As to quaternary structure, homodimer and heterodimers.

It localises to the cell membrane. The polypeptide is CASP-like protein 1E2 (Vitis vinifera (Grape)).